The primary structure comprises 406 residues: Fructose-1,6-bisphosphatase, chloroplastic (406 aa).

The transit peptide at 1–47 directs the protein to the chloroplast; it reads MAAAATTSSHLLLLSRQQAAASLQCGLSFRRQPGRLAGGSSAPSVRC. Glu128, Glu157, Asp178, Leu180, and Asp181 together coordinate Mg(2+). 181–184 provides a ligand contact to substrate; it reads DGSS. Cys222 and Cys227 are oxidised to a cystine. Substrate-binding residues include Asn286, Tyr318, Tyr336, Tyr338, and Lys348. Mg(2+) is bound at residue Glu354.

Belongs to the FBPase class 1 family. Homotetramer. Mg(2+) is required as a cofactor.

It is found in the plastid. The protein localises to the chloroplast stroma. The catalysed reaction is beta-D-fructose 1,6-bisphosphate + H2O = beta-D-fructose 6-phosphate + phosphate. The protein operates within carbohydrate biosynthesis; Calvin cycle. Inhibited by sodium chloride. In terms of biological role, catalyzes the irreversible reaction from fructose-1,6-bisphosphate to fructose-6-phosphate and inorganic phosphate, to regenerate the primary CO(2) acceptor molecule, ribulose-1,5-bisphosphate. Involved in the regulation of photosynthetic performance and sucrose synthesis. This chain is Fructose-1,6-bisphosphatase, chloroplastic, found in Oryza sativa subsp. indica (Rice).